The sequence spans 146 residues: PSVQGAAAQLTADVKKDLRDSWKVIGSDKKGNGVALMTTLFADNQETIGYFKRLGNVSQGMANDKLRGHSITLMYALQNFIDQLDNTDDLVCVVEKFAVNHITRKISAAEFGKINGPIKKVLASKNFGDKYANAWAKLVAVVQAAL.

Residues 9-146 (QLTADVKKDL…KLVAVVQAAL (138 aa)) enclose the Globin domain. H101 lines the heme b pocket.

It belongs to the globin family. Homodimer.

It localises to the cytoplasm. In Anadara broughtonii (Blood clam), this protein is Globin-1.